The chain runs to 509 residues: Maturase K (509 aa).

This sequence belongs to the intron maturase 2 family. MatK subfamily.

Its subcellular location is the plastid. It is found in the chloroplast. Functionally, usually encoded in the trnK tRNA gene intron. Probably assists in splicing its own and other chloroplast group II introns. This Atropa belladonna (Belladonna) protein is Maturase K.